A 309-amino-acid chain; its full sequence is Lipoyl synthase (309 aa).

7 residues coordinate [4Fe-4S] cluster: cysteine 56, cysteine 61, cysteine 67, cysteine 82, cysteine 86, cysteine 89, and serine 296. A Radical SAM core domain is found at 68 to 285 (FKRGTATFMI…RVAGLKMGFS (218 aa)).

This sequence belongs to the radical SAM superfamily. Lipoyl synthase family. The cofactor is [4Fe-4S] cluster.

It is found in the cytoplasm. It carries out the reaction [[Fe-S] cluster scaffold protein carrying a second [4Fe-4S](2+) cluster] + N(6)-octanoyl-L-lysyl-[protein] + 2 oxidized [2Fe-2S]-[ferredoxin] + 2 S-adenosyl-L-methionine + 4 H(+) = [[Fe-S] cluster scaffold protein] + N(6)-[(R)-dihydrolipoyl]-L-lysyl-[protein] + 4 Fe(3+) + 2 hydrogen sulfide + 2 5'-deoxyadenosine + 2 L-methionine + 2 reduced [2Fe-2S]-[ferredoxin]. It participates in protein modification; protein lipoylation via endogenous pathway; protein N(6)-(lipoyl)lysine from octanoyl-[acyl-carrier-protein]: step 2/2. Catalyzes the radical-mediated insertion of two sulfur atoms into the C-6 and C-8 positions of the octanoyl moiety bound to the lipoyl domains of lipoate-dependent enzymes, thereby converting the octanoylated domains into lipoylated derivatives. In Syntrophotalea carbinolica (strain DSM 2380 / NBRC 103641 / GraBd1) (Pelobacter carbinolicus), this protein is Lipoyl synthase.